We begin with the raw amino-acid sequence, 585 residues long: Bifunctional purine biosynthesis protein ade10 (585 aa).

The 142-residue stretch at 1 to 142 (MYALLSVYDK…KNHARVTILS (142 aa)) folds into the MGS-like domain. Residues 30–33 (SGGT), 60–63 (RVKT), 97–98 (CN), and 121–122 (DI) each bind IMP. The active-site Proton donor/acceptor; for FAICAR cyclization activity is the Lys-133. 5-amino-1-(5-phospho-beta-D-ribosyl)imidazole-4-carboxamide is bound by residues 200 to 201 (RY), His-260, Gly-308, Asp-331, Asn-423, and Arg-443. Catalysis depends on His-260, which acts as the Proton acceptor; for AICAR formyltransferase activity. Ile-444 serves as a coordination point for (6R)-10-formyltetrahydrofolate. Phe-534 provides a ligand contact to 5-amino-1-(5-phospho-beta-D-ribosyl)imidazole-4-carboxamide. Residues Asp-539 and 558–559 (SV) each bind (6R)-10-formyltetrahydrofolate. Position 581 (Arg-581) interacts with 5-amino-1-(5-phospho-beta-D-ribosyl)imidazole-4-carboxamide.

It belongs to the PurH family. As to quaternary structure, homodimer.

It localises to the cytoplasm. The protein localises to the cytosol. The catalysed reaction is (6R)-10-formyltetrahydrofolate + 5-amino-1-(5-phospho-beta-D-ribosyl)imidazole-4-carboxamide = 5-formamido-1-(5-phospho-D-ribosyl)imidazole-4-carboxamide + (6S)-5,6,7,8-tetrahydrofolate. It catalyses the reaction IMP + H2O = 5-formamido-1-(5-phospho-D-ribosyl)imidazole-4-carboxamide. The protein operates within purine metabolism; IMP biosynthesis via de novo pathway; 5-formamido-1-(5-phospho-D-ribosyl)imidazole-4-carboxamide from 5-amino-1-(5-phospho-D-ribosyl)imidazole-4-carboxamide (10-formyl THF route): step 1/1. Its pathway is purine metabolism; IMP biosynthesis via de novo pathway; IMP from 5-formamido-1-(5-phospho-D-ribosyl)imidazole-4-carboxamide: step 1/1. Functionally, bifunctional enzyme that catalyzes the last two steps of purine biosynthesis. Acts as a transformylase that incorporates a formyl group to the AMP analog AICAR (5-amino-1-(5-phospho-beta-D-ribosyl)imidazole-4-carboxamide) to produce the intermediate formyl-AICAR (FAICAR). Also catalyzes the cyclization of FAICAR to IMP. In Schizosaccharomyces pombe (strain 972 / ATCC 24843) (Fission yeast), this protein is Bifunctional purine biosynthesis protein ade10 (ade10).